The primary structure comprises 197 residues: Superoxide dismutase [Fe] (197 aa).

His26, His75, Asp157, and His161 together coordinate Fe cation.

Belongs to the iron/manganese superoxide dismutase family. Homotetramer. Fe cation serves as cofactor.

The enzyme catalyses 2 superoxide + 2 H(+) = H2O2 + O2. In terms of biological role, destroys superoxide anion radicals which are normally produced within the cells and which are toxic to biological systems. This Cupriavidus metallidurans (strain ATCC 43123 / DSM 2839 / NBRC 102507 / CH34) (Ralstonia metallidurans) protein is Superoxide dismutase [Fe].